The primary structure comprises 646 residues: Preterminal protein (646 aa).

A Nuclear localization signal motif is present at residues Arg-357–Arg-366. Ser-555 bears the O-(5'-phospho-DNA)-serine mark. Residues Leu-619–Met-646 form a disordered region. Residues Pro-624–Ala-640 are compositionally biased toward pro residues.

The protein belongs to the adenoviridae terminal protein family. In terms of assembly, heterodimer with the polymerase; this heterodimer binds to bp 9 to 18 of the genome. Interacts with host POU2F1; POU2F1 binds to the auxiliary sequences in the inverted terminal repeats and tethers the pTP-POL heterodimer to the origin DNA thereby participating in the assembly of the pre-initiation complex (POL-TP-DBP-NFIA-POU2F1). In terms of processing, preterminal protein is used to replicate viral genome, upon genomic encapsidation it is processed first into iTP and finally into TP by adenovirus protease.

Its subcellular location is the host nucleus matrix. In terms of biological role, protein covalently bound to the viral DNA that acts as a primer for viral genomic replication by DNA strand displacement. Assembles on the viral origin of replication in an initiation complex with viral polymerase, DBP, host NFIA and host POU2F1/OCT1. During initiation, the polymerase covalently couples the first dCTP with Ser-580 of pTP. The terminal protein stimulates the template activity over 20 fold compared to protein-free templates. Neo-synthesized viral genomes are linked to two preterminal proteins, one for each 5' end. These new genomes are encapsidated in the nucleus, and during capsid maturation by viral protease, preterminal protein is first cleaved into intermediary (iTP), then into mature TP. May play a role in host nuclear matrix localization of genomic DNA. This chain is Preterminal protein, found in Homo sapiens (Human).